Consider the following 725-residue polypeptide: Methionine--tRNA ligase (725 aa).

Residues 27–37 carry the 'HIGH' region motif; it reads PYANGQIHIGH. Positions 158, 161, 171, and 174 each coordinate Zn(2+). The 'KMSKS' region motif lies at 348–352; the sequence is KMSKS. Lysine 351 provides a ligand contact to ATP. The region spanning 619 to 725 is the tRNA-binding domain; the sequence is DFAKIDLRIA…SGAKPGMRVK (107 aa).

This sequence belongs to the class-I aminoacyl-tRNA synthetase family. MetG type 1 subfamily. In terms of assembly, homodimer. Zn(2+) serves as cofactor.

The protein resides in the cytoplasm. The catalysed reaction is tRNA(Met) + L-methionine + ATP = L-methionyl-tRNA(Met) + AMP + diphosphate. In terms of biological role, is required not only for elongation of protein synthesis but also for the initiation of all mRNA translation through initiator tRNA(fMet) aminoacylation. This Burkholderia pseudomallei (strain 1710b) protein is Methionine--tRNA ligase.